A 376-amino-acid chain; its full sequence is c-di-GMP synthase (376 aa).

The protein belongs to the CD-NTase family. G05 subfamily.

It carries out the reaction 2 GTP = 3',3'-c-di-GMP + 2 diphosphate. Cyclic nucleotide synthase (second messenger synthase) of a CBASS antivirus system. CBASS (cyclic oligonucleotide-based antiphage signaling system) provides immunity against bacteriophage. The CD-NTase protein synthesizes cyclic nucleotides in response to infection; these serve as specific second messenger signals. The signals activate a diverse range of effectors, leading to bacterial cell death and thus abortive phage infection. A type I-D CBASS(GG) system. Functionally, cyclic dinucleotide synthase that catalyzes the synthesis of c-di-GMP, has no activity with other NTP substrates. In Roseivirga ehrenbergii (strain DSM 102268 / JCM 13514 / KCTC 12282 / NCIMB 14502 / KMM 6017), this protein is c-di-GMP synthase.